A 247-amino-acid polypeptide reads, in one-letter code: Proteasome subunit alpha (247 aa).

The protein belongs to the peptidase T1A family. In terms of assembly, the 20S proteasome core is composed of 14 alpha and 14 beta subunits that assemble into four stacked heptameric rings, resulting in a barrel-shaped structure. The two inner rings, each composed of seven catalytic beta subunits, are sandwiched by two outer rings, each composed of seven alpha subunits. The catalytic chamber with the active sites is on the inside of the barrel. Has a gated structure, the ends of the cylinder being occluded by the N-termini of the alpha-subunits. Is capped at one or both ends by the proteasome regulatory ATPase, PAN.

It localises to the cytoplasm. Its activity is regulated as follows. The formation of the proteasomal ATPase PAN-20S proteasome complex, via the docking of the C-termini of PAN into the intersubunit pockets in the alpha-rings, triggers opening of the gate for substrate entry. Interconversion between the open-gate and close-gate conformations leads to a dynamic regulation of the 20S proteasome proteolysis activity. Functionally, component of the proteasome core, a large protease complex with broad specificity involved in protein degradation. The protein is Proteasome subunit alpha of Methanosarcina thermophila.